The following is a 314-amino-acid chain: 4-hydroxy-3-methylbut-2-enyl diphosphate reductase (314 aa).

Cys-12 lines the [4Fe-4S] cluster pocket. The (2E)-4-hydroxy-3-methylbut-2-enyl diphosphate site is built by His-43 and His-81. His-43 and His-81 together coordinate dimethylallyl diphosphate. Residues His-43 and His-81 each contribute to the isopentenyl diphosphate site. Cys-103 contributes to the [4Fe-4S] cluster binding site. His-131 is a (2E)-4-hydroxy-3-methylbut-2-enyl diphosphate binding site. His-131 contacts dimethylallyl diphosphate. An isopentenyl diphosphate-binding site is contributed by His-131. Glu-133 serves as the catalytic Proton donor. Thr-170 lines the (2E)-4-hydroxy-3-methylbut-2-enyl diphosphate pocket. Cys-198 is a [4Fe-4S] cluster binding site. (2E)-4-hydroxy-3-methylbut-2-enyl diphosphate is bound by residues Ser-226, Asn-228, and Ser-271. Positions 226, 228, and 271 each coordinate dimethylallyl diphosphate. Isopentenyl diphosphate contacts are provided by Ser-226, Asn-228, and Ser-271.

It belongs to the IspH family. Requires [4Fe-4S] cluster as cofactor.

The catalysed reaction is isopentenyl diphosphate + 2 oxidized [2Fe-2S]-[ferredoxin] + H2O = (2E)-4-hydroxy-3-methylbut-2-enyl diphosphate + 2 reduced [2Fe-2S]-[ferredoxin] + 2 H(+). The enzyme catalyses dimethylallyl diphosphate + 2 oxidized [2Fe-2S]-[ferredoxin] + H2O = (2E)-4-hydroxy-3-methylbut-2-enyl diphosphate + 2 reduced [2Fe-2S]-[ferredoxin] + 2 H(+). The protein operates within isoprenoid biosynthesis; dimethylallyl diphosphate biosynthesis; dimethylallyl diphosphate from (2E)-4-hydroxy-3-methylbutenyl diphosphate: step 1/1. Its pathway is isoprenoid biosynthesis; isopentenyl diphosphate biosynthesis via DXP pathway; isopentenyl diphosphate from 1-deoxy-D-xylulose 5-phosphate: step 6/6. Catalyzes the conversion of 1-hydroxy-2-methyl-2-(E)-butenyl 4-diphosphate (HMBPP) into a mixture of isopentenyl diphosphate (IPP) and dimethylallyl diphosphate (DMAPP). Acts in the terminal step of the DOXP/MEP pathway for isoprenoid precursor biosynthesis. The protein is 4-hydroxy-3-methylbut-2-enyl diphosphate reductase of Bacillus subtilis (strain 168).